The sequence spans 640 residues: MPTITLPDGSKKSFNAAITGQEIAESIGSSLAKAAIAVRIGEKLQDLSDTIACDADVTIITDKDEAGLEIIRHSCAHLLGHALKQLWPQAKMVIGPVIENGFYYDIEADHRFTPEDLAVLEERMQKLAATGYSVKKEWTPVARAREIFHERQEDFKIRLIDDFDADVKEVGLYYHQEYVDMCRGPHVPDMGKIKAFKLTKLSGSYWRGDAQAEALQRIYGVAFRSKKELDDYLTQQAEAEKRDHRKIGKALDLFHLQEEAPGMVFWHAKGWTIYREIENYMRTKLRKYGYQEVQGPQILDRSLWEKSGHWDKFGGNMFTCCIDNHDFAVKPMNCPGHVQIFNQGLKSYRELPIRYAEFGICHRNEPSGTLHGIMRVRRFVQDDGHIFCARNQVRVEIERTCRMVYEVYDDFGFKNVELALSTRPEKRVGSDEIWDEAERGLQEALEAQNLAFRLQPGEGAFYGPKIEFTLKDSLGRRWQCGTVQLDFSMPARLGAEYIDEHGEKQTPVMIHRAILGSLERFIGILIEQYAGNMPVWLSPVQAMIMPITDTHADYVQNVMQKFIAAGIRAEIDLRNEKISYKIREHTLQRVPFLLVAGDREKQSNTLSVRTRDGKELGVMEIATIIEHIRHLIETKSQEIE.

One can recognise a TGS domain in the interval Met1 to Thr61. Residues Asp243–Pro534 form a catalytic region. Residues Cys334, His385, and His511 each coordinate Zn(2+).

The protein belongs to the class-II aminoacyl-tRNA synthetase family. Homodimer. The cofactor is Zn(2+).

Its subcellular location is the cytoplasm. The catalysed reaction is tRNA(Thr) + L-threonine + ATP = L-threonyl-tRNA(Thr) + AMP + diphosphate + H(+). Its function is as follows. Catalyzes the attachment of threonine to tRNA(Thr) in a two-step reaction: L-threonine is first activated by ATP to form Thr-AMP and then transferred to the acceptor end of tRNA(Thr). Also edits incorrectly charged L-seryl-tRNA(Thr). The protein is Threonine--tRNA ligase of Dichelobacter nodosus (strain VCS1703A).